A 508-amino-acid polypeptide reads, in one-letter code: MDLKQQYILALDEGTSSCRTIVFDKDLNQVAIAQNEFNQFFPKSGWVEQDPLEIWSVQLATMQSAKNKAQIKSNNIAAVGITNQRETIVLWNKENGLPVYNAIVWQDQRTASLCDKLNQDTKIKEFVKKHTGLPINPYFSATKIAWILENVPLAQKMLKEDKLLAGTIDTWLIWKLTGGKMHVTDVSNASRTLLFDITTMTWSQELGDIFKVPLSILPKVMPSNAHFGDIVPSHWSTSATGMVPIRGVAGDQQAALFGQLCVEPAMVKNTYGTGCFMLMNIGNELKYSQHNLLTTVAWQLENQKPVYALEGSVFVAGAALKWLRDSLKVMYSAAESDFYAKLAQKEEQEVVFVPAFTGLGAPYWDASARGAIFGIEANTKREHLVKATLEAIAFQANDLIKAMASDLNSSIKKIKADGGACNSNYLMQFQADIANLEVIIPKNVETTTMGAAFLAGLAVNYWKDTKQLEKLTGIAKQFKSQMNQTVREKKSKRWNEAVKRTLKWASLD.

Thr15 provides a ligand contact to ADP. The ATP site is built by Thr15, Ser16, and Ser17. Residue Thr15 coordinates sn-glycerol 3-phosphate. Arg19 provides a ligand contact to ADP. Positions 85, 86, 138, and 251 each coordinate sn-glycerol 3-phosphate. 5 residues coordinate glycerol: Arg85, Glu86, Tyr138, Asp251, and Gln252. The ADP site is built by Thr273, Gly317, and Gly419. Positions 273, 317, and 419 each coordinate ATP.

It belongs to the FGGY kinase family.

The enzyme catalyses glycerol + ATP = sn-glycerol 3-phosphate + ADP + H(+). Its pathway is polyol metabolism; glycerol degradation via glycerol kinase pathway; sn-glycerol 3-phosphate from glycerol: step 1/1. Inhibited by fructose 1,6-bisphosphate (FBP). In terms of biological role, key enzyme in the regulation of glycerol uptake and metabolism. Catalyzes the phosphorylation of glycerol to yield sn-glycerol 3-phosphate. The polypeptide is Glycerol kinase (Mycoplasma pneumoniae (strain ATCC 29342 / M129 / Subtype 1) (Mycoplasmoides pneumoniae)).